Consider the following 209-residue polypeptide: Imidazole glycerol phosphate synthase subunit HisH (209 aa).

Residues 1-205 (MIAIIDYGMG…KGVVETWKSS (205 aa)) form the Glutamine amidotransferase type-1 domain. Cys79 (nucleophile) is an active-site residue. Residues His180 and Glu182 contribute to the active site.

As to quaternary structure, heterodimer of HisH and HisF.

It is found in the cytoplasm. The enzyme catalyses 5-[(5-phospho-1-deoxy-D-ribulos-1-ylimino)methylamino]-1-(5-phospho-beta-D-ribosyl)imidazole-4-carboxamide + L-glutamine = D-erythro-1-(imidazol-4-yl)glycerol 3-phosphate + 5-amino-1-(5-phospho-beta-D-ribosyl)imidazole-4-carboxamide + L-glutamate + H(+). The catalysed reaction is L-glutamine + H2O = L-glutamate + NH4(+). It participates in amino-acid biosynthesis; L-histidine biosynthesis; L-histidine from 5-phospho-alpha-D-ribose 1-diphosphate: step 5/9. IGPS catalyzes the conversion of PRFAR and glutamine to IGP, AICAR and glutamate. The HisH subunit catalyzes the hydrolysis of glutamine to glutamate and ammonia as part of the synthesis of IGP and AICAR. The resulting ammonia molecule is channeled to the active site of HisF. The protein is Imidazole glycerol phosphate synthase subunit HisH of Bacillus thuringiensis (strain Al Hakam).